Reading from the N-terminus, the 432-residue chain is Heme-based aerotactic transducer HemAT (432 aa).

In terms of domain architecture, Methyl-accepting transducer spans 184–420 (YNQTRDEQEE…EVSRAVSHVA (237 aa)).

It belongs to the methyl-accepting chemotaxis (MCP) protein family. As to quaternary structure, homotetramer.

In terms of biological role, heme-containing signal transducer responsible for aerotaxis, the migratory response toward or away from oxygen. The chain is Heme-based aerotactic transducer HemAT (hemAT) from Bacillus subtilis (strain 168).